The primary structure comprises 417 residues: Imidazolonepropionase (417 aa).

Fe(3+) contacts are provided by His80 and His82. Zn(2+) is bound by residues His80 and His82. 4-imidazolone-5-propanoate contacts are provided by Arg89, Tyr152, and His187. Tyr152 lines the N-formimidoyl-L-glutamate pocket. Residue His252 participates in Fe(3+) binding. Position 252 (His252) interacts with Zn(2+). Glu255 serves as a coordination point for 4-imidazolone-5-propanoate. Position 326 (Asp326) interacts with Fe(3+). Position 326 (Asp326) interacts with Zn(2+). 2 residues coordinate N-formimidoyl-L-glutamate: Asn328 and Gly330. Ser331 serves as a coordination point for 4-imidazolone-5-propanoate.

It belongs to the metallo-dependent hydrolases superfamily. HutI family. Zn(2+) serves as cofactor. It depends on Fe(3+) as a cofactor.

The protein localises to the cytoplasm. It carries out the reaction 4-imidazolone-5-propanoate + H2O = N-formimidoyl-L-glutamate. The protein operates within amino-acid degradation; L-histidine degradation into L-glutamate; N-formimidoyl-L-glutamate from L-histidine: step 3/3. Catalyzes the hydrolytic cleavage of the carbon-nitrogen bond in imidazolone-5-propanoate to yield N-formimidoyl-L-glutamate. It is the third step in the universal histidine degradation pathway. This Bacteroides thetaiotaomicron (strain ATCC 29148 / DSM 2079 / JCM 5827 / CCUG 10774 / NCTC 10582 / VPI-5482 / E50) protein is Imidazolonepropionase.